The chain runs to 1356 residues: Collagen alpha-2(I) chain (1356 aa).

The first 22 residues, 1 to 22, serve as a signal peptide directing secretion; that stretch reads MLSFVDNRILLLLAVTSLLASC. The disordered stretch occupies residues 22 to 1112; it reads CQSGGLKGPR…DQSGGYDEYR (1091 aa). Pyrrolidone carboxylic acid is present on residues glutamine 23 and glutamine 73. The propeptide at 23-72 is N-terminal propeptide; sequence QSGGLKGPRGAKGPRGDRGPQGPNGRDGKAGLPGIAGPPGPPGLGGNFAA. Gly residues predominate over residues 76-88; sequence GGKGSDPGPGPMG. Lysine 78 bears the Allysine mark. At lysine 171 the chain carries 5-hydroxylysine; alternate. Lysine 171 carries O-linked (Gal...) hydroxylysine; alternate glycosylation. Residues 219 to 248 show a composition bias toward low complexity; it reads AGPAGPAGARGADGSTGPAGPAGPLGAAGP. Gly residues predominate over residues 259–280; that stretch reads GEIGGAGSNGPSGPQGGRGEPG. A compositionally biased stretch (low complexity) spans 281–315; it reads INGAVGPVGPVGNPGNNGINGAKGAAGLPGVAGAP. Positions 317 to 327 are enriched in pro residues; the sequence is FPGPRGGPGPQ. 4 stretches are compositionally biased toward gly residues: residues 334–343, 391–412, 418–427, and 448–457; these read GARGLGGDPG, GARGGAGTRGLPGLEGRGGPIG, GATGPGGIRG, and GNSGQGGPPG. Residues 479–489 are compositionally biased toward low complexity; that stretch reads PRGQPGNIGFP. A compositionally biased stretch (gly residues) spans 511–520; sequence GLRGGPGADG. 2 stretches are compositionally biased toward low complexity: residues 521-564 and 587-603; these read NNGA…AGKA and NSGPAGSAGSQGAIGAR. 2 stretches are compositionally biased toward gly residues: residues 610–619 and 628–646; these read GPDGGKGEPG and GHQGPGGMPGERGAGGTPG. A compositionally biased stretch (basic and acidic residues) spans 648-659; that stretch reads KGEKGEGGHRGL. A compositionally biased stretch (low complexity) spans 716–731; that stretch reads LPGFAGPPGSDGQSGP. A compositionally biased stretch (gly residues) spans 736–745; the sequence is GPAGGKGDVG. 2 stretches are compositionally biased toward low complexity: residues 746–764 and 776–786; these read PAGPAGPSGQSGPSGASGP and PSGLTGFPGAA. Over residues 787–796 the composition is skewed to gly residues; that stretch reads GRVGGPGPAG. Over residues 797–809 the composition is skewed to low complexity; that stretch reads IAGPPGSAGPAGK. Gly residues predominate over residues 817–826; sequence GDPGPGGPQG. Residues 827 to 858 show a composition bias toward low complexity; that stretch reads EQGVVGPAGISGDKGPSGESGPPGAPGTAGPQ. Residues 877 to 886 are compositionally biased toward gly residues; the sequence is GLPGGPGAVG. Residues 888-903 are compositionally biased toward low complexity; sequence PGRLGPAGASGPRGPA. Gly residues predominate over residues 976–985; that stretch reads GPTGNGGPVG. Residues 999-1013 show a composition bias toward basic and acidic residues; that stretch reads RGEKGGAGEKGDRGM. The segment covering 1083 to 1095 has biased composition (pro residues); the sequence is AGPPGSPGLPGPA. A propeptide spans 1114–1356 (C-terminal propeptide); it reads DQPSFRAKDY…GLDIGPVCFK (243 aa). The 234-residue stretch at 1123-1356 folds into the Fibrillar collagen NC1 domain; sequence YEVDATIKSL…GLDIGPVCFK (234 aa). 3 disulfides stabilise this stretch: cysteine 1153-cysteine 1185, cysteine 1193-cysteine 1354, and cysteine 1262-cysteine 1307. The Ca(2+) site is built by aspartate 1171, asparagine 1173, glutamine 1174, cysteine 1176, and aspartate 1179. Asparagine 1257 carries an N-linked (GlcNAc...) asparagine glycan.

Belongs to the fibrillar collagen family. As to quaternary structure, trimers of one alpha 2(I) and two alpha 1(I) chains. Post-translationally, prolines at the third position of the tripeptide repeating unit (G-X-Y) are hydroxylated in some or all of the chains. As to expression, forms the fibrils of tendon, ligaments and bones. In bones the fibrils are mineralized with calcium hydroxyapatite.

It is found in the secreted. Its subcellular location is the extracellular space. The protein resides in the extracellular matrix. Functionally, type I collagen is a member of group I collagen (fibrillar forming collagen). The polypeptide is Collagen alpha-2(I) chain (col1a2) (Oncorhynchus mykiss (Rainbow trout)).